Reading from the N-terminus, the 177-residue chain is Large ribosomal subunit protein uL6 (177 aa).

This sequence belongs to the universal ribosomal protein uL6 family. In terms of assembly, part of the 50S ribosomal subunit.

Functionally, this protein binds to the 23S rRNA, and is important in its secondary structure. It is located near the subunit interface in the base of the L7/L12 stalk, and near the tRNA binding site of the peptidyltransferase center. The polypeptide is Large ribosomal subunit protein uL6 (Pasteurella multocida (strain Pm70)).